The primary structure comprises 316 residues: Acetyl-coenzyme A carboxylase carboxyl transferase subunit alpha (316 aa).

Residues 39 to 293 enclose the CoA carboxyltransferase C-terminal domain; it reads KLEEKNAQLT…KKHLQANLTN (255 aa).

It belongs to the AccA family. In terms of assembly, acetyl-CoA carboxylase is a heterohexamer composed of biotin carboxyl carrier protein (AccB), biotin carboxylase (AccC) and two subunits each of ACCase subunit alpha (AccA) and ACCase subunit beta (AccD).

The protein resides in the cytoplasm. The catalysed reaction is N(6)-carboxybiotinyl-L-lysyl-[protein] + acetyl-CoA = N(6)-biotinyl-L-lysyl-[protein] + malonyl-CoA. The protein operates within lipid metabolism; malonyl-CoA biosynthesis; malonyl-CoA from acetyl-CoA: step 1/1. In terms of biological role, component of the acetyl coenzyme A carboxylase (ACC) complex. First, biotin carboxylase catalyzes the carboxylation of biotin on its carrier protein (BCCP) and then the CO(2) group is transferred by the carboxyltransferase to acetyl-CoA to form malonyl-CoA. The chain is Acetyl-coenzyme A carboxylase carboxyl transferase subunit alpha from Coxiella burnetii (strain RSA 331 / Henzerling II).